Here is a 148-residue protein sequence, read N- to C-terminus: ATP synthase epsilon chain (148 aa).

It belongs to the ATPase epsilon chain family. In terms of assembly, F-type ATPases have 2 components, CF(1) - the catalytic core - and CF(0) - the membrane proton channel. CF(1) has five subunits: alpha(3), beta(3), gamma(1), delta(1), epsilon(1). CF(0) has three main subunits: a, b and c.

The protein resides in the cell membrane. Functionally, produces ATP from ADP in the presence of a proton gradient across the membrane. This Streptococcus thermophilus (strain ATCC BAA-250 / LMG 18311) protein is ATP synthase epsilon chain.